Consider the following 218-residue polypeptide: Uracil-DNA glycosylase (218 aa).

Residue Asp-68 is the Proton acceptor of the active site.

This sequence belongs to the uracil-DNA glycosylase (UDG) superfamily. UNG family. As to quaternary structure, homodimer. Interacts with protein OPG148. Component of the Uracil-DNA glycosylase(UDG)-OPG148-polymerase complex; OPG148 and UDG form a heterodimeric processivity factor that associates with OPG71 to form the processive polymerase holoenzyme.

The enzyme catalyses Hydrolyzes single-stranded DNA or mismatched double-stranded DNA and polynucleotides, releasing free uracil.. Plays an essential role in viral replication as a component of the DNA polymerase processivity factor. Excises uracil residues from the DNA which can arise as a result of misincorporation of dUMP residues by DNA polymerase or due to deamination of cytosine. In Homo sapiens (Human), this protein is Uracil-DNA glycosylase (OPG116).